Consider the following 191-residue polypeptide: Molybdenum cofactor guanylyltransferase (191 aa).

Residues 13–15, K26, D72, and D102 each bind GTP; that span reads LAG. D102 contributes to the Mg(2+) binding site.

The protein belongs to the MobA family. In terms of assembly, monomer. The cofactor is Mg(2+).

The protein resides in the cytoplasm. The catalysed reaction is Mo-molybdopterin + GTP + H(+) = Mo-molybdopterin guanine dinucleotide + diphosphate. Functionally, transfers a GMP moiety from GTP to Mo-molybdopterin (Mo-MPT) cofactor (Moco or molybdenum cofactor) to form Mo-molybdopterin guanine dinucleotide (Mo-MGD) cofactor. This chain is Molybdenum cofactor guanylyltransferase, found in Pseudomonas entomophila (strain L48).